A 231-amino-acid polypeptide reads, in one-letter code: Large ribosomal subunit protein uL1 (231 aa).

This sequence belongs to the universal ribosomal protein uL1 family. Part of the 50S ribosomal subunit.

In terms of biological role, binds directly to 23S rRNA. The L1 stalk is quite mobile in the ribosome, and is involved in E site tRNA release. Protein L1 is also a translational repressor protein, it controls the translation of the L11 operon by binding to its mRNA. This chain is Large ribosomal subunit protein uL1, found in Mesomycoplasma hyopneumoniae (strain 232) (Mycoplasma hyopneumoniae).